A 306-amino-acid polypeptide reads, in one-letter code: BRCA2 and CDKN1A-interacting protein (306 aa).

The segment covering 1 to 10 (MASRPKRRAV) has biased composition (basic residues). The segment at 1 to 45 (MASRPKRRAVSRVPPALGDEEEEDEVEEQDEDDSDEEEDEEDEVV) is disordered. The span at 18-45 (GDEEEEDEVEEQDEDDSDEEEDEEDEVV) shows a compositional bias: acidic residues. Phosphoserine is present on residues Ser-34 and Ser-104. The interval 51–159 (IEFEAYSISD…EKSMVEQLDR (109 aa)) is interaction with BRCA2. Residues 153–251 (MVEQLDRLFN…NAEEEFFYEK (99 aa)) form an interaction with CDKN1A region. Ser-273 is subject to Phosphoserine.

This sequence belongs to the BCP1 family. As to quaternary structure, interacts with BRCA2, CDKN1A and MTDH/LYRIC. Interacts with DCTN1/p150-glued and ACTR1A/ARP1. Interacts with alpha-, beta- and gamma-tubulins. Interacts with TENT5C; the interaction has no effect on TENT5C poly(A) polymerase function.

It localises to the nucleus. The protein localises to the cytoplasm. It is found in the cytoskeleton. Its subcellular location is the microtubule organizing center. The protein resides in the centrosome. It localises to the centriole. The protein localises to the spindle pole. During interphase, required for microtubule organizing and anchoring activities. During mitosis, required for the organization and stabilization of the spindle pole. May promote cell cycle arrest by enhancing the inhibition of CDK2 activity by CDKN1A. May be required for repair of DNA damage by homologous recombination in conjunction with BRCA2. May not be involved in non-homologous end joining (NHEJ). In Bos taurus (Bovine), this protein is BRCA2 and CDKN1A-interacting protein (BCCIP).